The following is a 614-amino-acid chain: Sulfite reductase [NADPH] flavoprotein alpha-component (614 aa).

Residues 79–217 (LTIIFASQTG…AATEWRKQVL (139 aa)) enclose the Flavodoxin-like domain. FMN is bound by residues 85 to 90 (SQTGNA), 132 to 135 (STNG), and 168 to 177 (LGDSSYQFFC). An FAD-binding FR-type domain is found at 249-463 (EQPYTASLST…VEHNNNFKLP (215 aa)). Residues Thr-337, Thr-371, 401-404 (RLYS), 419-421 (TVG), Tyr-425, and 434-437 (GGAS) contribute to the FAD site. Residues 534–535 (SR), 540–544 (KVYVQ), and Asp-576 contribute to the NADP(+) site. Tyr-614 is a binding site for FAD.

This sequence belongs to the NADPH-dependent sulphite reductase flavoprotein subunit CysJ family. It in the N-terminal section; belongs to the flavodoxin family. The protein in the C-terminal section; belongs to the flavoprotein pyridine nucleotide cytochrome reductase family. In terms of assembly, alpha(8)-beta(8). The alpha component is a flavoprotein, the beta component is a hemoprotein. FAD is required as a cofactor. Requires FMN as cofactor.

The catalysed reaction is hydrogen sulfide + 3 NADP(+) + 3 H2O = sulfite + 3 NADPH + 4 H(+). It functions in the pathway sulfur metabolism; hydrogen sulfide biosynthesis; hydrogen sulfide from sulfite (NADPH route): step 1/1. Its function is as follows. Component of the sulfite reductase complex that catalyzes the 6-electron reduction of sulfite to sulfide. This is one of several activities required for the biosynthesis of L-cysteine from sulfate. The flavoprotein component catalyzes the electron flow from NADPH -&gt; FAD -&gt; FMN to the hemoprotein component. This Vibrio cholerae serotype O1 (strain ATCC 39541 / Classical Ogawa 395 / O395) protein is Sulfite reductase [NADPH] flavoprotein alpha-component.